A 270-amino-acid chain; its full sequence is Tetraspanin-17 (270 aa).

Over 1-19 the chain is Cytoplasmic; it reads MPGKHQHFQEPEVGCCGKY. The chain crosses the membrane as a helical span at residues 20-40; that stretch reads FLFGFNIVFWVLGALFLAIGL. The Extracellular segment spans residues 41-63; it reads WAWSEKGVLSNISALTDLGGLDP. The N-linked (GlcNAc...) asparagine glycan is linked to Asn51. Residues 64 to 84 traverse the membrane as a helical segment; sequence VWLFVVVGGVMSVLGFAGCIG. At 85-94 the chain is on the cytoplasmic side; that stretch reads ALRENTFLLK. A helical membrane pass occupies residues 95-115; that stretch reads FFSVFLGLIFFLELATGILAF. The Extracellular segment spans residues 116-234; that stretch reads VFKDWIRDQL…GQFEKWLQDN (119 aa). 4 cysteine pairs are disulfide-bonded: Cys155–Cys223, Cys156–Cys188, Cys172–Cys182, and Cys189–Cys202. Residue Asn171 is glycosylated (N-linked (GlcNAc...) asparagine). Residues 235–255 traverse the membrane as a helical segment; it reads LIVVAGVFVGIALLQIFGICL. Residues 256 to 270 are Cytoplasmic-facing; it reads AQNLVSDIKAVKANW.

It belongs to the tetraspanin (TM4SF) family. In terms of assembly, interacts with ADAM10; the interaction influences ADAM10 substrate specificity, endocytosis and turnover.

The protein localises to the cell membrane. Part of TspanC8 subgroup, composed of 6 members that interact with the transmembrane metalloprotease ADAM10. This interaction is required for ADAM10 exit from the endoplasmic reticulum and for enzymatic maturation and trafficking to the cell surface as well as substrate specificity. Different TspanC8/ADAM10 complexes have distinct substrates. Seems to regulate VE-cadherin expression in endothelial cells probably through interaction with ADAM10, promoting leukocyte transmigration. This is Tetraspanin-17 (TSPAN17) from Bos taurus (Bovine).